The chain runs to 249 residues: Proteasome activator complex subunit 1 (249 aa).

The tract at residues 60–101 (PLDIPVPDPVKEKEKGERKKQQEKEDKDEKKKGEDEDKGPPC) is disordered. The span at 68-98 (PVKEKEKGERKKQQEKEDKDEKKKGEDEDKG) shows a compositional bias: basic and acidic residues.

The protein belongs to the PA28 family. As to quaternary structure, heterodimer of PSME1 and PSME2, which forms a hexameric ring. PSME1 can form homoheptamers.

Implicated in immunoproteasome assembly and required for efficient antigen processing. The PA28 activator complex enhances the generation of class I binding peptides by altering the cleavage pattern of the proteasome. This chain is Proteasome activator complex subunit 1 (PSME1), found in Macaca fascicularis (Crab-eating macaque).